A 547-amino-acid polypeptide reads, in one-letter code: Flagellar hook-associated protein 1 (547 aa).

Belongs to the flagella basal body rod proteins family.

The protein localises to the secreted. It is found in the bacterial flagellum. The chain is Flagellar hook-associated protein 1 (flgK) from Escherichia coli (strain K12).